The chain runs to 291 residues: Ribosomal RNA small subunit methyltransferase I (291 aa).

This sequence belongs to the methyltransferase superfamily. RsmI family.

The protein resides in the cytoplasm. The catalysed reaction is cytidine(1402) in 16S rRNA + S-adenosyl-L-methionine = 2'-O-methylcytidine(1402) in 16S rRNA + S-adenosyl-L-homocysteine + H(+). Functionally, catalyzes the 2'-O-methylation of the ribose of cytidine 1402 (C1402) in 16S rRNA. The polypeptide is Ribosomal RNA small subunit methyltransferase I (Neisseria meningitidis serogroup B (strain ATCC BAA-335 / MC58)).